Consider the following 141-residue polypeptide: Hemoglobin subunit alpha (141 aa).

In terms of domain architecture, Globin spans 2 to 141; it reads AFTACEKQTI…ICQELSSRYR (140 aa). Histidine 59 provides a ligand contact to O2. Histidine 88 provides a ligand contact to heme b.

Belongs to the globin family. As to quaternary structure, heterotetramer of two alpha chains and two beta chains. Red blood cells.

In terms of biological role, involved in oxygen transport from gills to the various peripheral tissues. The protein is Hemoglobin subunit alpha (HBA) of Mustelus griseus (Spotless smooth-hound).